A 236-amino-acid chain; its full sequence is Transcriptional activator protein SolR (236 aa).

The HTH luxR-type domain maps to 169–234; it reads VPESNAVLTT…QAVVKAIATG (66 aa). The segment at residues 193 to 212 is a DNA-binding region (H-T-H motif); it reads AYEIGQILRISERTVNFHVN.

Belongs to the autoinducer-regulated transcriptional regulatory protein family.

The protein is Transcriptional activator protein SolR (solR) of Ralstonia solanacearum (Pseudomonas solanacearum).